The following is a 251-amino-acid chain: Large ribosomal subunit protein uL16m (251 aa).

The transit peptide at 1–29 (MWRLLTRAPAPLWRMHFSDTWAALPTSAG) directs the protein to the mitochondrion.

It belongs to the universal ribosomal protein uL16 family. In terms of assembly, component of the mitochondrial ribosome large subunit (39S) which comprises a 16S rRNA and about 50 distinct proteins.

It is found in the mitochondrion. The polypeptide is Large ribosomal subunit protein uL16m (Mrpl16) (Rattus norvegicus (Rat)).